Consider the following 141-residue polypeptide: uncharacterized protein (141 aa).

Belongs to the peptidase C56 family.

This is an uncharacterized protein from Streptomyces lividans.